Reading from the N-terminus, the 294-residue chain is Protoheme IX farnesyltransferase (294 aa).

The next 9 helical transmembrane spans lie at 22–42 (VTQL…PDLP), 46–66 (IVIA…AINC), 89–109 (ITVP…MWVL), 116–136 (LTMW…TIIL), 143–163 (NIVI…AAVA), 170–190 (AWIL…ALAL), 211–231 (AFTQ…TMLP), 232–252 (FAVG…DVIF), and 272–292 (FTYS…DHYL).

It belongs to the UbiA prenyltransferase family. Protoheme IX farnesyltransferase subfamily.

It is found in the cell inner membrane. The enzyme catalyses heme b + (2E,6E)-farnesyl diphosphate + H2O = Fe(II)-heme o + diphosphate. Its pathway is porphyrin-containing compound metabolism; heme O biosynthesis; heme O from protoheme: step 1/1. Functionally, converts heme B (protoheme IX) to heme O by substitution of the vinyl group on carbon 2 of heme B porphyrin ring with a hydroxyethyl farnesyl side group. The polypeptide is Protoheme IX farnesyltransferase (Herminiimonas arsenicoxydans).